Reading from the N-terminus, the 337-residue chain is 5-formaminoimidazole-4-carboxamide-1-(beta)-D-ribofuranosyl 5'-monophosphate synthetase (337 aa).

2 residues coordinate 5-amino-1-(5-phospho-beta-D-ribosyl)imidazole-4-carboxamide: His23 and Ser87. Residues 121 to 328 (MRLLEYAGIP…IAHEIVNAVK (208 aa)) form the ATP-grasp domain. ATP-binding positions include 144 to 191 (PVIV…VPAY) and Glu213. Asn233 contacts 5-amino-1-(5-phospho-beta-D-ribosyl)imidazole-4-carboxamide. Glu272 and Glu285 together coordinate Mg(2+).

This sequence belongs to the phosphohexose mutase family. Requires Mg(2+) as cofactor. Mn(2+) is required as a cofactor.

The enzyme catalyses 5-amino-1-(5-phospho-beta-D-ribosyl)imidazole-4-carboxamide + formate + ATP = 5-formamido-1-(5-phospho-D-ribosyl)imidazole-4-carboxamide + ADP + phosphate. Its pathway is purine metabolism; IMP biosynthesis via de novo pathway; 5-formamido-1-(5-phospho-D-ribosyl)imidazole-4-carboxamide from 5-amino-1-(5-phospho-D-ribosyl)imidazole-4-carboxamide (formate route): step 1/1. Functionally, catalyzes the ATP- and formate-dependent formylation of 5-aminoimidazole-4-carboxamide-1-beta-d-ribofuranosyl 5'-monophosphate (AICAR) to 5-formaminoimidazole-4-carboxamide-1-beta-d-ribofuranosyl 5'-monophosphate (FAICAR) in the absence of folates. This chain is 5-formaminoimidazole-4-carboxamide-1-(beta)-D-ribofuranosyl 5'-monophosphate synthetase, found in Caldivirga maquilingensis (strain ATCC 700844 / DSM 13496 / JCM 10307 / IC-167).